A 146-amino-acid chain; its full sequence is Large ribosomal subunit protein uL11 (146 aa).

The protein belongs to the universal ribosomal protein uL11 family. Part of the ribosomal stalk of the 50S ribosomal subunit. Interacts with L10 and the large rRNA to form the base of the stalk. L10 forms an elongated spine to which L12 dimers bind in a sequential fashion forming a multimeric L10(L12)X complex. One or more lysine residues are methylated.

Its function is as follows. Forms part of the ribosomal stalk which helps the ribosome interact with GTP-bound translation factors. The sequence is that of Large ribosomal subunit protein uL11 from Corynebacterium jeikeium (strain K411).